Here is a 46-residue protein sequence, read N- to C-terminus: Large ribosomal subunit protein bL36B (46 aa).

This sequence belongs to the bacterial ribosomal protein bL36 family.

The sequence is that of Large ribosomal subunit protein bL36B from Enterobacter sp. (strain 638).